A 72-amino-acid polypeptide reads, in one-letter code: Mitochondrial import protein 2 (72 aa).

The disordered stretch occupies residues 1–22; sequence MAEVLDLEIDPISDGEDDTYSS. Topologically, residues 1 to 34 are cytoplasmic; the sequence is MAEVLDLEIDPISDGEDDTYSSELDDDLKDSIEQ. Residues 35–52 traverse the membrane as a helical segment; the sequence is LERVLCLVVFPLLGKFLG. The Mitochondrial intermembrane segment spans residues 53 to 72; the sequence is RKFAFHAWARWLERRRLVSN.

This sequence belongs to the MIM2 family. In terms of assembly, component of the mitochondrial outer import machinery (MIM) complex containing at least mim1 and mim2. Interacts with mim1. Interacts with mitophagy receptor atg43.

The protein resides in the mitochondrion outer membrane. Functionally, component of the mitochondrial outer import machinery (MIM) complex that mediates transport of proteins into mitochondrial compartments. Promotes the insertion of tom70 into the outer mitochondrial membrane. Promotes the insertion of atg43 into the outer mitochondrial membrane. Involved in import of the subset of proteins with multiple alpha-helical transmembrane segments. The sequence is that of Mitochondrial import protein 2 from Schizosaccharomyces pombe (strain 972 / ATCC 24843) (Fission yeast).